Here is a 545-residue protein sequence, read N- to C-terminus: CTP synthase (545 aa).

The tract at residues 1 to 266 (MATNYIFVTG…DTFVCDRFRL (266 aa)) is amidoligase domain. Serine 14 serves as a coordination point for CTP. Serine 14 lines the UTP pocket. ATP contacts are provided by residues 15-20 (SLGKGI) and aspartate 72. Residues aspartate 72 and glutamate 140 each contribute to the Mg(2+) site. Residues 147-149 (DIE), 187-192 (KTKPTQ), and lysine 223 contribute to the CTP site. UTP contacts are provided by residues 187–192 (KTKPTQ) and lysine 223. Residue 239–241 (KDV) coordinates ATP. Positions 291–542 (TIGMVGKYVE…VKAAKDYQDS (252 aa)) constitute a Glutamine amidotransferase type-1 domain. Glycine 352 contacts L-glutamine. The active-site Nucleophile; for glutamine hydrolysis is the cysteine 379. L-glutamine contacts are provided by residues 380 to 383 (LGMQ), glutamate 403, and arginine 470. Catalysis depends on residues histidine 515 and glutamate 517.

Belongs to the CTP synthase family. Homotetramer.

It catalyses the reaction UTP + L-glutamine + ATP + H2O = CTP + L-glutamate + ADP + phosphate + 2 H(+). The enzyme catalyses L-glutamine + H2O = L-glutamate + NH4(+). The catalysed reaction is UTP + NH4(+) + ATP = CTP + ADP + phosphate + 2 H(+). It functions in the pathway pyrimidine metabolism; CTP biosynthesis via de novo pathway; CTP from UDP: step 2/2. With respect to regulation, allosterically activated by GTP, when glutamine is the substrate; GTP has no effect on the reaction when ammonia is the substrate. The allosteric effector GTP functions by stabilizing the protein conformation that binds the tetrahedral intermediate(s) formed during glutamine hydrolysis. Inhibited by the product CTP, via allosteric rather than competitive inhibition. Catalyzes the ATP-dependent amination of UTP to CTP with either L-glutamine or ammonia as the source of nitrogen. Regulates intracellular CTP levels through interactions with the four ribonucleotide triphosphates. The protein is CTP synthase of Actinobacillus pleuropneumoniae serotype 7 (strain AP76).